We begin with the raw amino-acid sequence, 394 residues long: SVGFKAGVKDYRLTYYTPEYETKDTDILAAFRVTPQPGVPPEEAGAAVAAESSTGTWTTVWTDGLTSLDRYKGRCYHIEPVAGEENQFIAYVAYPLDLFEEGSVTNMFTSIVGNVFGFKALRALRLEDLRIPPAYSKTFQGPPHGIQVERDKLNKYGRPLLGCTIKPKLGLSAKNYGRAVYECLRGGLDFTKDDENVNSQPFMRWRDRFLFCAEAIYKAQAETGEIKGHYLNATAGTCEEMIKRAVFARELGVPIVMHDYLTGGFTANTSLAHYCRDNGLLLHIHRAMHAVIDRQKNHGIHFRVLAKALRMSGGDHIHSGTVVGKLEGEREITLGFVDLLRDDFIEKDRSRGIYFTQDWVSLPGVLPVASGGIHVWHMPALTEIFGDDSVLQFG.

Lys5 carries the post-translational modification N6,N6,N6-trimethyllysine. Substrate-binding residues include Asn114 and Thr164. Lys166 serves as the catalytic Proton acceptor. Residue Lys168 coordinates substrate. Positions 192, 194, and 195 each coordinate Mg(2+). Position 192 is an N6-carboxylysine (Lys192). The active-site Proton acceptor is the His285. Arg286, His318, and Ser370 together coordinate substrate.

The protein belongs to the RuBisCO large chain family. Type I subfamily. In terms of assembly, heterohexadecamer of 8 large chains and 8 small chains; disulfide-linked. The disulfide link is formed within the large subunit homodimers. Mg(2+) serves as cofactor. The disulfide bond which can form in the large chain dimeric partners within the hexadecamer appears to be associated with oxidative stress and protein turnover.

The protein localises to the plastid. It localises to the chloroplast. It catalyses the reaction 2 (2R)-3-phosphoglycerate + 2 H(+) = D-ribulose 1,5-bisphosphate + CO2 + H2O. It carries out the reaction D-ribulose 1,5-bisphosphate + O2 = 2-phosphoglycolate + (2R)-3-phosphoglycerate + 2 H(+). In terms of biological role, ruBisCO catalyzes two reactions: the carboxylation of D-ribulose 1,5-bisphosphate, the primary event in carbon dioxide fixation, as well as the oxidative fragmentation of the pentose substrate in the photorespiration process. Both reactions occur simultaneously and in competition at the same active site. This chain is Ribulose bisphosphate carboxylase large chain (rbcL), found in Nelumbo lutea (American lotus).